Consider the following 613-residue polypeptide: tRNA 5-methylaminomethyl-2-thiouridine biosynthesis bifunctional protein MnmC (613 aa).

The segment at 1–225 (MKKAKLIFKD…KREMIKAYLE (225 aa)) is tRNA (mnm(5)s(2)U34)-methyltransferase. Residues 252–613 (IGAGISSAVL…FLVRKLKKGL (362 aa)) are FAD-dependent cmnm(5)s(2)U34 oxidoreductase.

The protein in the N-terminal section; belongs to the methyltransferase superfamily. tRNA (mnm(5)s(2)U34)-methyltransferase family. This sequence in the C-terminal section; belongs to the DAO family. Requires FAD as cofactor.

The protein resides in the cytoplasm. The catalysed reaction is 5-aminomethyl-2-thiouridine(34) in tRNA + S-adenosyl-L-methionine = 5-methylaminomethyl-2-thiouridine(34) in tRNA + S-adenosyl-L-homocysteine + H(+). Its function is as follows. Catalyzes the last two steps in the biosynthesis of 5-methylaminomethyl-2-thiouridine (mnm(5)s(2)U) at the wobble position (U34) in tRNA. Catalyzes the FAD-dependent demodification of cmnm(5)s(2)U34 to nm(5)s(2)U34, followed by the transfer of a methyl group from S-adenosyl-L-methionine to nm(5)s(2)U34, to form mnm(5)s(2)U34. In Campylobacter jejuni subsp. doylei (strain ATCC BAA-1458 / RM4099 / 269.97), this protein is tRNA 5-methylaminomethyl-2-thiouridine biosynthesis bifunctional protein MnmC.